Reading from the N-terminus, the 2441-residue chain is Histone lysine acetyltransferase CREBBP (2441 aa).

2 disordered regions span residues 1-29 (MAEN…DNTD) and 73-168 (LRGG…PATS). Ala2 carries the post-translational modification N-acetylalanine. Over residues 20–29 (PGFSANDNTD) the composition is skewed to polar residues. Positions 79-89 (SSINPGIGNVS) are enriched in low complexity. The residue at position 120 (Ser120) is a Phosphoserine. Polar residues predominate over residues 121-168 (PLNQGDSSTPNLPKQAASTSGPTPPASQALNPQAQKQVGLVTSSPATS). Arg219 is subject to Omega-N-methylarginine. The segment at 226 to 409 (PAPAMQGATS…GKACQVAHCA (184 aa)) is interaction with SRCAP. Residues 261-272 (GGMTKMGMTGTT) are compositionally biased toward low complexity. Residues 261–292 (GGMTKMGMTGTTSPFGQPFSQTGGQQMGATGV) are disordered. A compositionally biased stretch (polar residues) spans 273–292 (SPFGQPFSQTGGQQMGATGV). The TAZ-type 1 zinc-finger motif lies at 346-432 (DPEKRKLIQQ…RHDCPVCLPL (87 aa)). 12 residues coordinate Zn(2+): His362, Cys366, Cys379, Cys384, His393, Cys397, Cys403, Cys408, His417, Cys421, Cys426, and Cys429. A KIX domain is found at 586 to 665 (GVRKGWHEHV…KIYKIQKELE (80 aa)). Arg600 and Arg624 each carry asymmetric dimethylarginine. Lys656 is subject to N6-acetyllysine. The span at 792–811 (FLPQNQFPSSSGAMSVNSVG) shows a compositional bias: polar residues. The interval 792–1088 (FLPQNQFPSS…SQPRKKIFKP (297 aa)) is disordered. A compositionally biased stretch (pro residues) spans 846–862 (PCPPVTQSPLHPTPPPA). Positions 894 to 906 (VSSGQTPTPTPGS) are enriched in polar residues. Composition is skewed to low complexity over residues 909–930 (SAAQ…VTPQ) and 938–957 (PSVA…HTQP). Residues 974–989 (PTPSSVTSAETSSQQP) are compositionally biased toward polar residues. Lys999 is covalently cross-linked (Glycyl lysine isopeptide (Lys-Gly) (interchain with G-Cter in SUMO1)). A compositionally biased stretch (basic and acidic residues) spans 1012–1022 (TESKGEPRSEM). An N6-acetyllysine modification is found at Lys1015. At Ser1031 the chain carries Phosphoserine. Positions 1033 to 1060 (VKEETDTTEQKSEPMEVEEKKPEVKVEA) are enriched in basic and acidic residues. Glycyl lysine isopeptide (Lys-Gly) (interchain with G-Cter in SUMO1) cross-links involve residues Lys1034 and Lys1057. Residues 1068 to 1080 (SNDTASQSTSPSQ) are compositionally biased toward polar residues. Ser1077 is modified (phosphoserine). One can recognise a Bromo domain in the interval 1086–1193 (FKPEELRQAL…EVFEQEIDPV (108 aa)). Positions 1125–1171 (DYFDIVKNPMDLSTIKRKLDTGQYQEPWQYVDDVWLMFNNAWLYNRK) are interaction with histone. The segment at 1163–1181 (NNAWLYNRKTSRVYKFCSK) is interaction with ASF1A. Lys1217 is subject to N6-acetyllysine. A CBP/p300-type HAT domain is found at 1324–1701 (KFSAKRLQTT…MLVELHTQGQ (378 aa)). Ser1383 and Ser1387 each carry phosphoserine; by IKKA. The tract at residues 1434-1436 (YLD) is interaction with histone. Acetyl-CoA-binding positions include 1435 to 1437 (LDS), 1447 to 1448 (RT), Ile1494, Arg1499, and Trp1503. Over residues 1557–1569 (LEQEEEERKKEES) the composition is skewed to basic and acidic residues. Residues 1557-1616 (LEQEEEERKKEESTAASETPEGSQGDSKNAKKKNNKKTNKNKSSISRANKKKPSMPNVSN) are disordered. An N6-acetyllysine mark is found at Lys1584, Lys1592, Lys1593, Lys1596, and Lys1598. A compositionally biased stretch (basic residues) spans 1586–1596 (AKKKNNKKTNK). Residues 1703-1751 (RFVYTCNECKHHVETRWHCTVCEDYDLCINCYNTKSHTHKMVKWGLGLD) form a ZZ-type zinc finger. Residues Cys1708, Cys1711, Cys1721, Cys1724, Cys1730, Cys1733, His1739, and His1741 each coordinate Zn(2+). N6-acetyllysine occurs at positions 1742 and 1745. Phosphoserine is present on Ser1764. Residues 1766–1847 (QESRRLSIQR…KCPVPFCLNI (82 aa)) form a TAZ-type 2 zinc finger. A disordered region spans residues 1875–1959 (TRNVPQQSLP…AQPPPAAVEA (85 aa)). 2 stretches are compositionally biased toward pro residues: residues 1901-1913 (PQTP…PQPS) and 1944-1955 (PAPPPPAQPPPA). A phosphoserine mark is found at Ser2064, Ser2077, and Ser2080. The tract at residues 2112 to 2421 (NQPGMQPQPG…NTPNRSALSS (310 aa)) is disordered. The span at 2113 to 2138 (QPGMQPQPGLQSQPGMQPQPGMHQQP) shows a compositional bias: low complexity. A compositionally biased stretch (polar residues) spans 2167–2188 (PQGQALNIMNPGHNPNMTNMNP). Low complexity-rich tracts occupy residues 2197–2216 (QLLQ…QQQQ), 2260–2279 (MGQM…PGLG), and 2286–2304 (IQQA…KQQI). Polar residues-rich tracts occupy residues 2314-2326 (SPQQ…QPQA) and 2333-2342 (QIATSLSNQV). The span at 2348 to 2371 (VQSPRPQSQPPHSSPSPRIQPQPS) shows a compositional bias: pro residues. Ser2350 bears the Phosphoserine mark. Residues 2410 to 2421 (QLNTPNRSALSS) are compositionally biased toward polar residues.

Part of a complex composed of MSX3, CREBBP/CBP AND EP300/p300; the interaction with MSX3 decreases histone acetylation activity. Interacts with DHX9 (via N-terminus); this interaction mediates association with RNA polymerase II holoenzyme and stimulates CREB-dependent transcriptional activation. Interacts (via transactivation domain and C-terminus) with PCNA; the interaction occurs on chromatin in UV-irradiated damaged cells. Found in a complex containing NCOA2; NCOA3; IKKA; IKKB and IKBKG. Probably part of a complex with HIF1A and EP300. The TAZ-type 1 domain interacts with HIF1A. Interacts with SRCAP, ELF3, MLLT7/FOXO4, N4BP2, NCOA6, PCAF, PELP1, PML, SMAD1, SMAD2, SMAD3, SPIB and TRERF1. Interacts with KLF1; the interaction results in acetylation and enhancement of transcriptional activity of KLF1. Interacts with MAFG; the interaction acetylates MAFG in the basic region and stimulates NFE2 transcriptional activity through increasing its DNA-binding activity. Interacts with IRF2; the interaction acetylates IRF2 and regulates its activity on the H4 promoter. Interacts with IRF3 (when phosphorylated); forming the dsRNA-activated factor 1 (DRAF1), a complex which activates the transcription of the type I interferon genes. Interacts (via N-terminus) with SS18L1/CREST (via C-terminus). Interacts with FOXO1; the interaction acetylates FOXO1 and inhibits its transcriptional activity. Interacts with MECOM and MTDH. Interacts with ASF1A and ASF1B; this promotes histone acetylation. Interacts with acetylated TP53/p53 and with the acetylated histones H3 and H4. Interacts with CITED1 (via C-terminus). Interacts with GATA1; the interaction results in acetylation and enhancement of transcriptional activity of GATA1. Interacts with MAF, CARM1. NCOA3, ZCCHC12, DDX17, DDX5 and CITED4 (C-terminal region). Interacts with phosphorylated CREB1. Interacts with DAXX; the interaction is dependent on CBP sumoylation and results in suppression of the transcriptional activity via recruitment of HDAC2 to DAXX. Interacts with NPAS2, CLOCK and BMAL1. Interacts with SMAD4; negatively regulated by ZBTB7A. Forms a complex with KMT2A and CREB1. Interacts with DDX3X; this interaction may facilitate HNF4A acetylation. Interacts with MSX1; the interaction may inhibit MSX1 autoinactivation. Interacts with MSX3. Interacts with ACSS2. Methylation of the KIX domain by CARM1 blocks association with CREB. This results in the blockade of CREB signaling, and in activation of apoptotic response. Post-translationally, phosphorylated by CHUK/IKKA at Ser-1383 and Ser-1387; these phosphorylations promote cell growth by switching the binding preference of CREBBP from TP53 to NF-kappa-B. In terms of processing, sumoylation negatively regulates transcriptional activity via the recruitment of DAAX. Autoacetylation is required for binding to protein substrates, such as acetylated histones and acetylated TP53/p53. Autoacetylation is induced by glucose and fatty acids.

The protein resides in the cytoplasm. It localises to the nucleus. The catalysed reaction is L-lysyl-[histone] + acetyl-CoA = N(6)-acetyl-L-lysyl-[histone] + CoA + H(+). It catalyses the reaction L-lysyl-[protein] + acetyl-CoA = N(6)-acetyl-L-lysyl-[protein] + CoA + H(+). The enzyme catalyses (S)-lactoyl-CoA + L-lysyl-[protein] = N(6)-[(S)-lactoyl]-L-lysyl-[protein] + CoA + H(+). Functionally, acetylates histones, giving a specific tag for transcriptional activation. Mediates acetylation of histone H3 at 'Lys-18' and 'Lys-27' (H3K18ac and H3K27ac, respectively). Also acetylates non-histone proteins, like DDX21, FBL, IRF2, MAFG, NCOA3, POLR1E/PAF53 and FOXO1. Binds specifically to phosphorylated CREB and enhances its transcriptional activity toward cAMP-responsive genes. Acts as a coactivator of ALX1. Acts as a circadian transcriptional coactivator which enhances the activity of the circadian transcriptional activators: NPAS2-BMAL1 and CLOCK-BMAL1 heterodimers. Acetylates PCNA; acetylation promotes removal of chromatin-bound PCNA and its degradation during nucleotide excision repair (NER). Acetylates POLR1E/PAF53, leading to decreased association of RNA polymerase I with the rDNA promoter region and coding region. Acetylates DDX21, thereby inhibiting DDX21 helicase activity. Acetylates FBL, preventing methylation of 'Gln-105' of histone H2A (H2AQ104me). In addition to protein acetyltransferase, can use different acyl-CoA substrates, such as lactoyl-CoA, and is able to mediate protein lactylation. Catalyzes lactylation of MRE11 in response to DNA damage, thereby promoting DNA double-strand breaks (DSBs) via homologous recombination (HR). Functions as a transcriptional coactivator for SMAD4 in the TGF-beta signaling pathway. The sequence is that of Histone lysine acetyltransferase CREBBP (Crebbp) from Mus musculus (Mouse).